The sequence spans 122 residues: Transcription initiation factor IIA subunit 2 (122 aa).

Phosphoserine is present on residues Ser95 and Ser102.

It belongs to the TFIIA subunit 2 family. As to quaternary structure, TFIIA is a heterodimer composed of the large TOA1 and a small TOA2 subunits. Interacts with TBP. Interacts with TAF11. Interacts with KAP122.

The protein resides in the cytoplasm. It localises to the nucleus. TFIIA is a component of the transcription machinery of RNA polymerase II and plays an important role in transcriptional activation. TFIIA in a complex with TBP mediates transcriptional activity. The sequence is that of Transcription initiation factor IIA subunit 2 (TOA2) from Saccharomyces cerevisiae (strain ATCC 204508 / S288c) (Baker's yeast).